A 210-amino-acid polypeptide reads, in one-letter code: Outer-membrane lipoprotein carrier protein (210 aa).

The N-terminal stretch at 1–23 (MLMFSRFRYIFFAVALLSGPVCA) is a signal peptide.

The protein belongs to the LolA family. Monomer.

The protein resides in the periplasm. Participates in the translocation of lipoproteins from the inner membrane to the outer membrane. Only forms a complex with a lipoprotein if the residue after the N-terminal Cys is not an aspartate (The Asp acts as a targeting signal to indicate that the lipoprotein should stay in the inner membrane). In Xylella fastidiosa (strain Temecula1 / ATCC 700964), this protein is Outer-membrane lipoprotein carrier protein.